The following is a 530-amino-acid chain: FSD1-like protein (530 aa).

At Met-1 the chain carries N-acetylmethionine. Residues 102–141 are a coiled coil; it reads KQEQARKSQELQSQISQCNNALENSEELLEFATRSLDIKE. The 58-residue stretch at 137-194 folds into the COS domain; it reads LDIKEPEEFSKAARQIKDRVTMASAFRLSLKPKVSDNMTHLMVDFSQERQMLQTLKFL. The Fibronectin type-III domain maps to 196–300; that stretch reads VPKAPEIDPV…DPVTLETKAL (105 aa). Residues 300–506 enclose the B30.2/SPRY domain; that stretch reads LNFNLDNSSS…LSTGMQVPSA (207 aa). The disordered stretch occupies residues 322-366; the sequence is WDPTGGKGQESKIKGKENKGRSGTPSPKRTSVGSRPPAVRGSRDR. Positions 330-341 are enriched in basic and acidic residues; the sequence is QESKIKGKENKG. Positions 342 to 354 are enriched in polar residues; the sequence is RSGTPSPKRTSVG. Phosphoserine occurs at positions 520 and 523.

In Homo sapiens (Human), this protein is FSD1-like protein (FSD1L).